A 106-amino-acid chain; its full sequence is Glutaredoxin-1 (106 aa).

Position 2 is an N-acetylalanine (Ala-2). The Glutaredoxin domain maps to 3 to 106 (QAFVNSKIQP…TRLQQIGALK (104 aa)). Position 9 is an N6-succinyllysine (Lys-9). Disulfide bonds link Cys-23–Cys-26 and Cys-79–Cys-83.

The protein belongs to the glutaredoxin family.

The protein localises to the cytoplasm. In terms of biological role, has a glutathione-disulfide oxidoreductase activity in the presence of NADPH and glutathione reductase. Reduces low molecular weight disulfides and proteins. This is Glutaredoxin-1 (GLRX) from Sus scrofa (Pig).